The chain runs to 174 residues: Acetolactate synthase small subunit (174 aa).

The ACT domain occupies 4–78; sequence TLSVLVQDEA…NILNVQDVTN (75 aa).

The protein belongs to the acetolactate synthase small subunit family. Dimer of large and small chains.

It localises to the plastid. The protein localises to the chloroplast. It catalyses the reaction 2 pyruvate + H(+) = (2S)-2-acetolactate + CO2. It participates in amino-acid biosynthesis; L-isoleucine biosynthesis; L-isoleucine from 2-oxobutanoate: step 1/4. The protein operates within amino-acid biosynthesis; L-valine biosynthesis; L-valine from pyruvate: step 1/4. This Porphyra purpurea (Red seaweed) protein is Acetolactate synthase small subunit (ilvH).